The sequence spans 148 residues: Small ribosomal subunit protein uS9 (148 aa).

It belongs to the universal ribosomal protein uS9 family.

The protein is Small ribosomal subunit protein uS9 (RpS16) of Drosophila melanogaster (Fruit fly).